The primary structure comprises 396 residues: Metallophosphoesterase 1 (396 aa).

A helical transmembrane segment spans residues 28-48 (TVVIISVLLFCEYFIYYLVLF). A divalent metal cation is bound by residues Asp75, Asp117, Asn155, His249, His303, and His305. The helical transmembrane segment at 356–376 (TVLTMYGAAAGFLMILILVHF) threads the bilayer.

It belongs to the metallophosphoesterase superfamily. MPPE1 family. Interacts with GPI-anchor proteins (via the GPI portion). Interacts with TMED10. Mn(2+) serves as cofactor.

It is found in the endoplasmic reticulum-Golgi intermediate compartment membrane. In terms of biological role, metallophosphoesterase that catalyzes the removal of a side-chain ethanolamine-phosphate (EtNP) from the second mannose of the GPI-anchor protein intermediate. Participates in the glycan remodeling steps of GPI-anchor maturation to allow an efficient transport of GPI-anchor proteins from the endoplasmic reticulum to the Golgi. This chain is Metallophosphoesterase 1, found in Mus musculus (Mouse).